Consider the following 212-residue polypeptide: Large ribosomal subunit protein uL1 (212 aa).

This sequence belongs to the universal ribosomal protein uL1 family. As to quaternary structure, part of the 50S ribosomal subunit.

In terms of biological role, binds directly to 23S rRNA. Probably involved in E site tRNA release. Protein L1 is also a translational repressor protein, it controls the translation of its operon by binding to its mRNA. In Methanothermobacter thermautotrophicus (strain ATCC 29096 / DSM 1053 / JCM 10044 / NBRC 100330 / Delta H) (Methanobacterium thermoautotrophicum), this protein is Large ribosomal subunit protein uL1.